The primary structure comprises 90 residues: ATP synthase subunit c (90 aa).

The next 2 membrane-spanning stretches (helical) occupy residues 4–24 and 53–73; these read FVYS…GCGI and IGLA…LILI.

This sequence belongs to the ATPase C chain family. In terms of assembly, F-type ATPases have 2 components, F(1) - the catalytic core - and F(0) - the membrane proton channel. F(1) has five subunits: alpha(3), beta(3), gamma(1), delta(1), epsilon(1). F(0) has three main subunits: a(1), b(2) and c(10-14). The alpha and beta chains form an alternating ring which encloses part of the gamma chain. F(1) is attached to F(0) by a central stalk formed by the gamma and epsilon chains, while a peripheral stalk is formed by the delta and b chains.

Its subcellular location is the cell inner membrane. F(1)F(0) ATP synthase produces ATP from ADP in the presence of a proton or sodium gradient. F-type ATPases consist of two structural domains, F(1) containing the extramembraneous catalytic core and F(0) containing the membrane proton channel, linked together by a central stalk and a peripheral stalk. During catalysis, ATP synthesis in the catalytic domain of F(1) is coupled via a rotary mechanism of the central stalk subunits to proton translocation. Functionally, key component of the F(0) channel; it plays a direct role in translocation across the membrane. A homomeric c-ring of between 10-14 subunits forms the central stalk rotor element with the F(1) delta and epsilon subunits. This Syntrophobacter fumaroxidans (strain DSM 10017 / MPOB) protein is ATP synthase subunit c.